The primary structure comprises 916 residues: MNYKDTLLMPKTDFPMRGGLPNKEPQIQEMWDNDDQYRKALEKNKNNPSFILHDGPPYANGNLHMGHALNKIIKDFIVRYKTMQGFYAPYVPGWDTHGLPIEQALTKKGVDRKKMSVAEFREKCKEFALKQIDIQKKDFKRLGVRGDFNNPYITLTPEYEAAQIRLFGEMADKGLIYKGKKPVYWSPSSESSLAEAEIEYHDKRSASIYVAFDVKDSKGKVDSDAQFIIWTTTPWTIPSNVAITVHPELKYGQYNVDGHKYIVAQALSEEVAEALGWDKDSIQLEKEFTGKELEFVEAQHPFLDRVSLVINGEHVTTDAGTGCVHTAPGHGEDDYIVGQKYDLPVISPLNDKGVFTEEGGPFEGMFYDKANKAVTDLLKEKDALLKLDFITHSYPHDWRTKKPVIFRATPQWFASINKVRQDILDAIEDTNFKVDWGKTRIYNMIRDRGEWVISRQRVWGVPLPVFYAENGDIIMTKETVNHVADLFEKHGSNIWFEKEAKELLPEGFSHPGSPNGEFTKETDIMDVWFDSGSSHRGVLETRPELSFPADLYFEGSDQYRGWFNSSITTAVATRGQAPYKFLLSHGFVMDGEGKKMSKSLGNVIVPDQVVKQKGADIARLWVSSTDYLSDVRISDEILKQTSDVYRKIRNTLRFMLGNINDFNPETDSIAETNLLEVDRYLLNRLREFTASTINNYENFDYLNIYQEVQNFINVELSNFYLDYGKDILYIEKKDSHKRRSMQTVLYQILVDMTKLLAPILVHTAEEVWSHTPHVKEESVHLSDMPKVVDVDEELLEKWNTFMNLRDDVNRALEQARNEKVIGKSLEAKVVIGSNESFNTAEFLQQFNDLQQLFIVSQVEVKDKVNDGVSYQYGDIHIKHAEGEKCERCWNYTEELGSVGELEHLCPRCQEVVKTLV.

A 'HIGH' region motif is present at residues 57 to 67 (PYANGNLHMGH). Glu554 contributes to the L-isoleucyl-5'-AMP binding site. A 'KMSKS' region motif is present at residues 595–599 (KMSKS). Lys598 serves as a coordination point for ATP. Positions 885, 888, 905, and 908 each coordinate Zn(2+).

It belongs to the class-I aminoacyl-tRNA synthetase family. IleS type 1 subfamily. As to quaternary structure, monomer. It depends on Zn(2+) as a cofactor.

The protein resides in the cytoplasm. The enzyme catalyses tRNA(Ile) + L-isoleucine + ATP = L-isoleucyl-tRNA(Ile) + AMP + diphosphate. In terms of biological role, catalyzes the attachment of isoleucine to tRNA(Ile). As IleRS can inadvertently accommodate and process structurally similar amino acids such as valine, to avoid such errors it has two additional distinct tRNA(Ile)-dependent editing activities. One activity is designated as 'pretransfer' editing and involves the hydrolysis of activated Val-AMP. The other activity is designated 'posttransfer' editing and involves deacylation of mischarged Val-tRNA(Ile). In Staphylococcus epidermidis (strain ATCC 35984 / DSM 28319 / BCRC 17069 / CCUG 31568 / BM 3577 / RP62A), this protein is Isoleucine--tRNA ligase (ileS).